Consider the following 397-residue polypeptide: S-adenosylmethionine:tRNA ribosyltransferase-isomerase (397 aa).

The protein belongs to the QueA family. In terms of assembly, monomer.

The protein resides in the cytoplasm. The catalysed reaction is 7-aminomethyl-7-carbaguanosine(34) in tRNA + S-adenosyl-L-methionine = epoxyqueuosine(34) in tRNA + adenine + L-methionine + 2 H(+). Its pathway is tRNA modification; tRNA-queuosine biosynthesis. Its function is as follows. Transfers and isomerizes the ribose moiety from AdoMet to the 7-aminomethyl group of 7-deazaguanine (preQ1-tRNA) to give epoxyqueuosine (oQ-tRNA). This chain is S-adenosylmethionine:tRNA ribosyltransferase-isomerase, found in Nostoc sp. (strain PCC 7120 / SAG 25.82 / UTEX 2576).